A 434-amino-acid chain; its full sequence is Serine hydroxymethyltransferase (434 aa).

(6S)-5,6,7,8-tetrahydrofolate is bound by residues Leu-133 and 137–139 (GHL). Lys-242 carries the post-translational modification N6-(pyridoxal phosphate)lysine.

The protein belongs to the SHMT family. Homodimer. Pyridoxal 5'-phosphate is required as a cofactor.

The protein resides in the cytoplasm. The catalysed reaction is (6R)-5,10-methylene-5,6,7,8-tetrahydrofolate + glycine + H2O = (6S)-5,6,7,8-tetrahydrofolate + L-serine. It participates in one-carbon metabolism; tetrahydrofolate interconversion. The protein operates within amino-acid biosynthesis; glycine biosynthesis; glycine from L-serine: step 1/1. In terms of biological role, catalyzes the reversible interconversion of serine and glycine with tetrahydrofolate (THF) serving as the one-carbon carrier. This reaction serves as the major source of one-carbon groups required for the biosynthesis of purines, thymidylate, methionine, and other important biomolecules. Also exhibits THF-independent aldolase activity toward beta-hydroxyamino acids, producing glycine and aldehydes, via a retro-aldol mechanism. This chain is Serine hydroxymethyltransferase, found in Bradyrhizobium sp. (strain BTAi1 / ATCC BAA-1182).